Consider the following 489-residue polypeptide: Beta-dihydromenaquinone-9 omega-hydroxylase (489 aa).

Cys435 is a binding site for heme.

The protein belongs to the cytochrome P450 family. Requires heme as cofactor.

It localises to the cytoplasm. It carries out the reaction beta-dihydromenaquinone-9 + 2 reduced [2Fe-2S]-[ferredoxin] + O2 + 2 H(+) = omega-hydroxy-beta-dihydromenaquinone-9 + 2 oxidized [2Fe-2S]-[ferredoxin] + H2O. Its function is as follows. Involved in the biosynthesis of sulfomenaquinone (SMK, initially named S881 on the basis of its mass), which is localized in the outer envelope of M.bovis and negatively regulates its virulence. Catalyzes the hydroxylation of beta-dihydromenaquinone-9, leading to the formation of omega-hydroxy-beta-dihydromenaquinone-9. The protein is Beta-dihydromenaquinone-9 omega-hydroxylase (cyp128) of Mycobacterium bovis (strain ATCC BAA-935 / AF2122/97).